Here is a 335-residue protein sequence, read N- to C-terminus: Ferrochelatase (335 aa).

Histidine 207 and glutamate 288 together coordinate Fe cation.

This sequence belongs to the ferrochelatase family.

The protein localises to the cytoplasm. It catalyses the reaction heme b + 2 H(+) = protoporphyrin IX + Fe(2+). It participates in porphyrin-containing compound metabolism; protoheme biosynthesis; protoheme from protoporphyrin-IX: step 1/1. Functionally, catalyzes the ferrous insertion into protoporphyrin IX. The protein is Ferrochelatase of Helicobacter pylori (strain J99 / ATCC 700824) (Campylobacter pylori J99).